The following is an 89-amino-acid chain: Small ribosomal subunit protein uS15 (89 aa).

It belongs to the universal ribosomal protein uS15 family. In terms of assembly, part of the 30S ribosomal subunit. Forms a bridge to the 50S subunit in the 70S ribosome, contacting the 23S rRNA.

One of the primary rRNA binding proteins, it binds directly to 16S rRNA where it helps nucleate assembly of the platform of the 30S subunit by binding and bridging several RNA helices of the 16S rRNA. In terms of biological role, forms an intersubunit bridge (bridge B4) with the 23S rRNA of the 50S subunit in the ribosome. The protein is Small ribosomal subunit protein uS15 of Anaeromyxobacter dehalogenans (strain 2CP-1 / ATCC BAA-258).